Consider the following 622-residue polypeptide: Cilia- and flagella-associated protein 206 (622 aa).

Positions 570–592 (SQVYPPKDTSTQSMREDSTGVPR) are disordered.

This sequence belongs to the CFAP206 family.

Its subcellular location is the cytoplasm. The protein localises to the cytoskeleton. It localises to the cilium axoneme. The protein resides in the cilium basal body. Its function is as follows. Essential for sperm motility and is involved in the regulation of the beating frequency of motile cilia on the epithelial cells of the respiratory tract. Required for the establishment of radial spokes in sperm flagella. This chain is Cilia- and flagella-associated protein 206, found in Homo sapiens (Human).